The chain runs to 376 residues: Arabinogalactan endo-beta-1,4-galactanase (376 aa).

The N-terminal stretch at 1 to 17 is a signal peptide; it reads MKKKILAATAILLAAIA. Glu161 serves as the catalytic Proton donor. Residue Glu270 is the Nucleophile of the active site. Residues Asp281 and Asn285 each coordinate Ca(2+).

The protein belongs to the glycosyl hydrolase 53 family. It depends on Ca(2+) as a cofactor.

The enzyme catalyses The enzyme specifically hydrolyzes (1-&gt;4)-beta-D-galactosidic linkages in type I arabinogalactans.. This Cellvibrio japonicus (strain Ueda107) (Pseudomonas fluorescens subsp. cellulosa) protein is Arabinogalactan endo-beta-1,4-galactanase (ganB).